The sequence spans 732 residues: 1,4-alpha-glucan branching enzyme GlgB (732 aa).

Aspartate 415 functions as the Nucleophile in the catalytic mechanism. Catalysis depends on glutamate 468, which acts as the Proton donor.

This sequence belongs to the glycosyl hydrolase 13 family. GlgB subfamily. In terms of assembly, monomer.

The enzyme catalyses Transfers a segment of a (1-&gt;4)-alpha-D-glucan chain to a primary hydroxy group in a similar glucan chain.. It participates in glycan biosynthesis; glycogen biosynthesis. Catalyzes the formation of the alpha-1,6-glucosidic linkages in glycogen by scission of a 1,4-alpha-linked oligosaccharide from growing alpha-1,4-glucan chains and the subsequent attachment of the oligosaccharide to the alpha-1,6 position. This is 1,4-alpha-glucan branching enzyme GlgB from Nitrosomonas eutropha (strain DSM 101675 / C91 / Nm57).